Here is a 173-residue protein sequence, read N- to C-terminus: MAKRRKSSRTKAKETNWQERVIQIRRVSKVVKGGKKLSFRAIVVVGNENGQVGVGVGKAGDVIGAVRKGVADGKKQLIDVSLTKASSITHITRGVSGGAKVIVRPAAPGTGVIAGGAVRTVLELAGVKNILAKQLGSSNPLNNARAVINALEGLRTFSEVAQERGVPLEHLYT.

Residues 17–80 (WQERVIQIRR…ADGKKQLIDV (64 aa)) form the S5 DRBM domain.

Belongs to the universal ribosomal protein uS5 family. As to quaternary structure, part of the 30S ribosomal subunit. Contacts proteins S4 and S8.

With S4 and S12 plays an important role in translational accuracy. Functionally, located at the back of the 30S subunit body where it stabilizes the conformation of the head with respect to the body. This chain is Small ribosomal subunit protein uS5, found in Rippkaea orientalis (strain PCC 8801 / RF-1) (Cyanothece sp. (strain PCC 8801)).